The primary structure comprises 447 residues: Tubulin beta-2 chain (447 aa).

Residues Q11, E69, S138, G142, T143, G144, N204, and N226 each coordinate GTP. Residue E69 participates in Mg(2+) binding. Positions 419 to 428 are enriched in polar residues; that stretch reads VSEYQQYQDA. The disordered stretch occupies residues 419–447; sequence VSEYQQYQDATSDEEGEYEDEDQEPEEDM. A compositionally biased stretch (acidic residues) spans 429-447; it reads TSDEEGEYEDEDQEPEEDM.

It belongs to the tubulin family. In terms of assembly, dimer of alpha and beta chains. A typical microtubule is a hollow water-filled tube with an outer diameter of 25 nm and an inner diameter of 15 nM. Alpha-beta heterodimers associate head-to-tail to form protofilaments running lengthwise along the microtubule wall with the beta-tubulin subunit facing the microtubule plus end conferring a structural polarity. Microtubules usually have 13 protofilaments but different protofilament numbers can be found in some organisms and specialized cells. The cofactor is Mg(2+).

It localises to the cytoplasm. It is found in the cytoskeleton. Functionally, tubulin is the major constituent of microtubules, a cylinder consisting of laterally associated linear protofilaments composed of alpha- and beta-tubulin heterodimers. Microtubules grow by the addition of GTP-tubulin dimers to the microtubule end, where a stabilizing cap forms. Below the cap, tubulin dimers are in GDP-bound state, owing to GTPase activity of alpha-tubulin. This chain is Tubulin beta-2 chain (TUBB2), found in Triticum aestivum (Wheat).